The sequence spans 714 residues: MEMASAFTLNVRLDNIAIITIDVPGEKMNTLKAEFASQVRAIIKQLRENKELRGVVFVSAKPDNFIAGADINMIGNCKTAQEAEVLARQGQQLMAEIHALPVPVIAAIHGACLGGGLELALACHGRVCTDDAKTVLGLPEVQLGLLPGSGGTQRLPRLIGVSTALEMILTGKQLRAKQALKLGLVDDVVPQSILLEAAVELAKQDRPSSRPLPVRERILAGPLGRALLFKMVGKKTEHKTQGNYPATERILEVVETGLAQGTSSGYDAEARAFGELAMTPQSQALRNIFFASTEVKKDSGSDAPPAPLNSVGILGGGLMGGGIAYVTACKAGLSVRIKDINPQGINHALKYSWDQLEGKVRRRHLKASERDKQLALISGTTDYCGFAHRDLIIEAVFENLELKQQMVAEVEQNCATHTIFASNTSSLPIGDIAAHAARPEQVIGLHFFSPVEKMPLVEIIPHASTSAQTIATTVKLAKKQGKTPIVVRDKAGFYVNRILAPYINEAIRMLTEGERIEHIDAALVKFGFPVGPIQLLDEVGIDTGTKIIPVLEAAYGERFSAPANVVSSILNDDRKGRKNGRGFYLYGQKGRKSKKQVDPAIYPLIGAQGQGRLSAPQVAERCVMLMLNEAVRCLDEQVIRSVRDGDIGAVFGIGFPPFLGGPFRYIDSLGAGEVVAIMQRLATQYGSRFTPCERLVEMSKRGESFWKTTATDLQ.

Residues 1–190 form an enoyl-CoA hydratase region; that stretch reads MEMASAFTLN…KLGLVDDVVP (190 aa). The tract at residues 306–714 is 3-hydroxyacyl-CoA dehydrogenase; that stretch reads APLNSVGILG…FWKTTATDLQ (409 aa).

It in the N-terminal section; belongs to the enoyl-CoA hydratase/isomerase family. This sequence in the central section; belongs to the 3-hydroxyacyl-CoA dehydrogenase family. Heterotetramer of two alpha chains (FadJ) and two beta chains (FadI).

Its subcellular location is the cytoplasm. The enzyme catalyses a (3S)-3-hydroxyacyl-CoA = a (2E)-enoyl-CoA + H2O. The catalysed reaction is a 4-saturated-(3S)-3-hydroxyacyl-CoA = a (3E)-enoyl-CoA + H2O. It catalyses the reaction a (3S)-3-hydroxyacyl-CoA + NAD(+) = a 3-oxoacyl-CoA + NADH + H(+). It carries out the reaction (3S)-3-hydroxybutanoyl-CoA = (3R)-3-hydroxybutanoyl-CoA. It functions in the pathway lipid metabolism; fatty acid beta-oxidation. Catalyzes the formation of a hydroxyacyl-CoA by addition of water on enoyl-CoA. Also exhibits 3-hydroxyacyl-CoA epimerase and 3-hydroxyacyl-CoA dehydrogenase activities. The polypeptide is Fatty acid oxidation complex subunit alpha (Escherichia coli (strain SMS-3-5 / SECEC)).